Here is a 410-residue protein sequence, read N- to C-terminus: ATP phosphoribosyltransferase regulatory subunit (410 aa).

It belongs to the class-II aminoacyl-tRNA synthetase family. HisZ subfamily. As to quaternary structure, heteromultimer composed of HisG and HisZ subunits.

The protein resides in the cytoplasm. The protein operates within amino-acid biosynthesis; L-histidine biosynthesis; L-histidine from 5-phospho-alpha-D-ribose 1-diphosphate: step 1/9. Functionally, required for the first step of histidine biosynthesis. May allow the feedback regulation of ATP phosphoribosyltransferase activity by histidine. In Synechococcus sp. (strain JA-3-3Ab) (Cyanobacteria bacterium Yellowstone A-Prime), this protein is ATP phosphoribosyltransferase regulatory subunit.